The following is a 208-amino-acid chain: Guanylate kinase (208 aa).

The Guanylate kinase-like domain occupies Gly4–Ser181. Gly11–Gly18 contributes to the ATP binding site.

The protein belongs to the guanylate kinase family.

It is found in the cytoplasm. The catalysed reaction is GMP + ATP = GDP + ADP. Its function is as follows. Essential for recycling GMP and indirectly, cGMP. This Clostridium tetani (strain Massachusetts / E88) protein is Guanylate kinase.